Here is a 181-residue protein sequence, read N- to C-terminus: MFGLKQFYQNEVKVKLAQELDIKNPMLLPKLEKIVISVGAGAHAKDMKIMQNIAQTISLIAGQKAVITKAKKSVAGFKIREGMAVGAKVTLRNKRMYNFLEKLIVISLPRVKDFRGISRNGFDGRGNYTFGINEQLIFPEVVYDDIMVSHGMNITMVTSTDNDKEAFKLLELLGLPFAKVR.

Belongs to the universal ribosomal protein uL5 family. As to quaternary structure, part of the 50S ribosomal subunit; part of the 5S rRNA/L5/L18/L25 subcomplex. Contacts the 5S rRNA and the P site tRNA. Forms a bridge to the 30S subunit in the 70S ribosome.

Its function is as follows. This is one of the proteins that bind and probably mediate the attachment of the 5S RNA into the large ribosomal subunit, where it forms part of the central protuberance. In the 70S ribosome it contacts protein S13 of the 30S subunit (bridge B1b), connecting the 2 subunits; this bridge is implicated in subunit movement. Contacts the P site tRNA; the 5S rRNA and some of its associated proteins might help stabilize positioning of ribosome-bound tRNAs. This is Large ribosomal subunit protein uL5 from Helicobacter acinonychis (strain Sheeba).